The chain runs to 279 residues: Fatty acid desaturase 4-like 2, chloroplastic (279 aa).

The transit peptide at 1–30 (MATSLQTKYTLNPITNNIPRSHRPSFLRVT) directs the protein to the chloroplast. 3 helical membrane-spanning segments follow: residues 68-90 (LWVAAGCTTVFVSFSKSIIGAFG), 98-118 (SLAGFAGYILADLGSGVYHWA), and 178-198 (VVHGFVSMFAFCVLFCQLFHA).

It belongs to the fatty acid desaturase CarF family.

Its subcellular location is the plastid. The protein resides in the chloroplast membrane. The protein operates within lipid metabolism; fatty acid metabolism. In terms of biological role, fatty acid desaturase involved in the production of chloroplast-specific phosphatidylglycerol molecular species. Catalyzes the formation of a trans double bond introduced close to the carboxyl group of palmitic acid, which is specifically esterified to the sn-2 glyceryl carbon of phosphatidylglycerol. The protein is Fatty acid desaturase 4-like 2, chloroplastic (FAD4L2) of Arabidopsis thaliana (Mouse-ear cress).